A 94-amino-acid chain; its full sequence is Large ribosomal subunit protein bL27 (94 aa).

Positions 1-9 (MLRLDLQFF) are excised as a propeptide.

Belongs to the bacterial ribosomal protein bL27 family. In terms of processing, the N-terminus is cleaved by ribosomal processing cysteine protease Prp.

The sequence is that of Large ribosomal subunit protein bL27 from Bacillus pumilus (strain SAFR-032).